A 507-amino-acid chain; its full sequence is ATP synthase subunit alpha, chloroplastic (507 aa).

170–177 (GDRQTGKT) provides a ligand contact to ATP.

The protein belongs to the ATPase alpha/beta chains family. In terms of assembly, F-type ATPases have 2 components, CF(1) - the catalytic core - and CF(0) - the membrane proton channel. CF(1) has five subunits: alpha(3), beta(3), gamma(1), delta(1), epsilon(1). CF(0) has four main subunits: a, b, b' and c.

The protein resides in the plastid. Its subcellular location is the chloroplast thylakoid membrane. It catalyses the reaction ATP + H2O + 4 H(+)(in) = ADP + phosphate + 5 H(+)(out). Its function is as follows. Produces ATP from ADP in the presence of a proton gradient across the membrane. The alpha chain is a regulatory subunit. This is ATP synthase subunit alpha, chloroplastic from Manihot esculenta (Cassava).